Here is a 234-residue protein sequence, read N- to C-terminus: Orotidine 5'-phosphate decarboxylase (234 aa).

Substrate-binding positions include D10, K32, 59-68 (DLKLHDIPTT), T122, R184, Q193, G213, and R214. Residue K61 is the Proton donor of the active site.

Belongs to the OMP decarboxylase family. Type 1 subfamily. As to quaternary structure, homodimer.

It catalyses the reaction orotidine 5'-phosphate + H(+) = UMP + CO2. The protein operates within pyrimidine metabolism; UMP biosynthesis via de novo pathway; UMP from orotate: step 2/2. Catalyzes the decarboxylation of orotidine 5'-monophosphate (OMP) to uridine 5'-monophosphate (UMP). The polypeptide is Orotidine 5'-phosphate decarboxylase (Bacillus pumilus (strain SAFR-032)).